The chain runs to 125 residues: Fluoride-specific ion channel FluC (125 aa).

The next 4 helical transmembrane spans lie at 1–21, 34–54, 72–92, and 101–121; these read MFAT…ARYG, FPWA…FLFF, TGGL…LVLF, and LLYM…GAWI. Residues Gly-76 and Thr-79 each contribute to the Na(+) site.

This sequence belongs to the fluoride channel Fluc/FEX (TC 1.A.43) family.

Its subcellular location is the cell inner membrane. The enzyme catalyses fluoride(in) = fluoride(out). With respect to regulation, na(+) is not transported, but it plays an essential structural role and its presence is essential for fluoride channel function. In terms of biological role, fluoride-specific ion channel. Important for reducing fluoride concentration in the cell, thus reducing its toxicity. In Acidithiobacillus ferrooxidans (strain ATCC 23270 / DSM 14882 / CIP 104768 / NCIMB 8455) (Ferrobacillus ferrooxidans (strain ATCC 23270)), this protein is Fluoride-specific ion channel FluC.